Consider the following 227-residue polypeptide: MELVFIRHGQSEWNAKNLFTGWRDVKLSEQGLAEAAAAGKKLKENGYEFDIAFTSVLTRAIKTCNIVLEESDQLFVPQIKTWRLNERHYGRLQGLDKKQTAEQYGDEQVRIWRRSYDTLPPLLDKDDEFSAHKDRRYAHLPADVIPDGENLQVTLERVLPFWEDQIAPAILSGKRVLVAAHGNSLRALAKHIEGISDEDIMGLEIPTGQPLVYKLDDNLKVIEKFYL.

Substrate contacts are provided by residues 7–14 (RHGQSEWN), 20–21 (TG), Arg59, 86–89 (ERHY), Lys97, 113–114 (RR), and 182–183 (GN). His8 serves as the catalytic Tele-phosphohistidine intermediate. Glu86 functions as the Proton donor/acceptor in the catalytic mechanism.

It belongs to the phosphoglycerate mutase family. BPG-dependent PGAM subfamily. Homodimer.

The catalysed reaction is (2R)-2-phosphoglycerate = (2R)-3-phosphoglycerate. It participates in carbohydrate degradation; glycolysis; pyruvate from D-glyceraldehyde 3-phosphate: step 3/5. Functionally, catalyzes the interconversion of 2-phosphoglycerate and 3-phosphoglycerate. This is 2,3-bisphosphoglycerate-dependent phosphoglycerate mutase from Neisseria meningitidis serogroup A / serotype 4A (strain DSM 15465 / Z2491).